The primary structure comprises 395 residues: MVEYKPIKKVVSGNYAAAYAVLHARVQVVAAYPITPQTSIIEKIAEFIANGEADIQYIPVESEHSAMAACIGASATGARVFTATSAQGLALMHEMLHWAAGARLPIVMVDVNRAMAPPWSVWDDQTDSLSQRDTGWMQFYAENNQEVYDGVLMAFKVAETVNVPAMVVESAFILSHTYEIVNMIPQELVDEFLPPRKPLYSLADFENPIAVGALATPADYYEFRYKLARAHEEAKKVIKDVGREFGERFGRDYSEMIEKAYIDDADFVFMGMGSLMGTVKEAVELLRKQGYKVGYAKVRWFRPFPREELLEIAESVKGIAVLDRNFSFGQEGILFTEAKGALYNNGARPIMKNYIVGLGGRDFTVSDVKAIAEDMKKVIESGKLDREVEWYHLKR.

Heterotetramer of one alpha, one beta, one delta and one gamma chain.

It catalyses the reaction 3-methyl-2-oxobutanoate + 2 oxidized [2Fe-2S]-[ferredoxin] + CoA = 2-methylpropanoyl-CoA + 2 reduced [2Fe-2S]-[ferredoxin] + CO2 + H(+). The polypeptide is Ketoisovalerate oxidoreductase subunit VorA (vorA) (Pyrococcus abyssi (strain GE5 / Orsay)).